The primary structure comprises 286 residues: Bifunctional protein FolD (286 aa).

Residues 165–167 and S190 contribute to the NADP(+) site; that span reads GRS.

The protein belongs to the tetrahydrofolate dehydrogenase/cyclohydrolase family. As to quaternary structure, homodimer.

The enzyme catalyses (6R)-5,10-methylene-5,6,7,8-tetrahydrofolate + NADP(+) = (6R)-5,10-methenyltetrahydrofolate + NADPH. It catalyses the reaction (6R)-5,10-methenyltetrahydrofolate + H2O = (6R)-10-formyltetrahydrofolate + H(+). The protein operates within one-carbon metabolism; tetrahydrofolate interconversion. In terms of biological role, catalyzes the oxidation of 5,10-methylenetetrahydrofolate to 5,10-methenyltetrahydrofolate and then the hydrolysis of 5,10-methenyltetrahydrofolate to 10-formyltetrahydrofolate. The protein is Bifunctional protein FolD of Staphylococcus aureus (strain MRSA252).